Reading from the N-terminus, the 264-residue chain is 3-methyl-2-oxobutanoate hydroxymethyltransferase (264 aa).

Mg(2+)-binding residues include Asp-45 and Asp-84. 3-methyl-2-oxobutanoate-binding positions include 45 to 46 (DS), Asp-84, and Lys-112. A Mg(2+)-binding site is contributed by Glu-114. The active-site Proton acceptor is Glu-181.

The protein belongs to the PanB family. In terms of assembly, homodecamer; pentamer of dimers. Mg(2+) is required as a cofactor.

The protein localises to the cytoplasm. It catalyses the reaction 3-methyl-2-oxobutanoate + (6R)-5,10-methylene-5,6,7,8-tetrahydrofolate + H2O = 2-dehydropantoate + (6S)-5,6,7,8-tetrahydrofolate. The protein operates within cofactor biosynthesis; (R)-pantothenate biosynthesis; (R)-pantoate from 3-methyl-2-oxobutanoate: step 1/2. Functionally, catalyzes the reversible reaction in which hydroxymethyl group from 5,10-methylenetetrahydrofolate is transferred onto alpha-ketoisovalerate to form ketopantoate. The polypeptide is 3-methyl-2-oxobutanoate hydroxymethyltransferase (Shewanella loihica (strain ATCC BAA-1088 / PV-4)).